Reading from the N-terminus, the 576-residue chain is Urease subunit alpha (576 aa).

Residues 132–576 enclose the Urease domain; the sequence is GGIDTHIHFI…LPMAQRYFLF (445 aa). 3 residues coordinate Ni(2+): H137, H139, and K220. K220 is modified (N6-carboxylysine). H222 serves as a coordination point for substrate. Ni(2+) is bound by residues H249 and H275. H323 (proton donor) is an active-site residue. Ni(2+) is bound at residue D363.

Belongs to the metallo-dependent hydrolases superfamily. Urease alpha subunit family. In terms of assembly, heterotrimer of UreA (gamma), UreB (beta) and UreC (alpha) subunits. Three heterotrimers associate to form the active enzyme. Requires Ni cation as cofactor. In terms of processing, carboxylation allows a single lysine to coordinate two nickel ions.

The protein localises to the cytoplasm. It carries out the reaction urea + 2 H2O + H(+) = hydrogencarbonate + 2 NH4(+). It functions in the pathway nitrogen metabolism; urea degradation; CO(2) and NH(3) from urea (urease route): step 1/1. This is Urease subunit alpha from Paenarthrobacter aurescens (strain TC1).